A 273-amino-acid chain; its full sequence is Ribonuclease Z (273 aa).

Residues H61, H63, H146, D169, and H233 each coordinate Zn(2+).

Belongs to the RNase Z family. As to quaternary structure, homodimer. It depends on Zn(2+) as a cofactor.

The enzyme catalyses Endonucleolytic cleavage of RNA, removing extra 3' nucleotides from tRNA precursor, generating 3' termini of tRNAs. A 3'-hydroxy group is left at the tRNA terminus and a 5'-phosphoryl group is left at the trailer molecule.. Its function is as follows. Zinc phosphodiesterase, which displays some tRNA 3'-processing endonuclease activity. Probably involved in tRNA maturation, by removing a 3'-trailer from precursor tRNA. This Mycobacterium tuberculosis (strain ATCC 25177 / H37Ra) protein is Ribonuclease Z.